The chain runs to 162 residues: NADH-quinone oxidoreductase subunit I (162 aa).

2 consecutive 4Fe-4S ferredoxin-type domains span residues 52-82 and 93-122; these read LRRY…IEAG and VRYD…EGPN. Positions 62, 65, 68, 72, 102, 105, 108, and 112 each coordinate [4Fe-4S] cluster.

The protein belongs to the complex I 23 kDa subunit family. NDH-1 is composed of 14 different subunits. Subunits NuoA, H, J, K, L, M, N constitute the membrane sector of the complex. Requires [4Fe-4S] cluster as cofactor.

The protein localises to the cell inner membrane. It catalyses the reaction a quinone + NADH + 5 H(+)(in) = a quinol + NAD(+) + 4 H(+)(out). Its function is as follows. NDH-1 shuttles electrons from NADH, via FMN and iron-sulfur (Fe-S) centers, to quinones in the respiratory chain. The immediate electron acceptor for the enzyme in this species is believed to be ubiquinone. Couples the redox reaction to proton translocation (for every two electrons transferred, four hydrogen ions are translocated across the cytoplasmic membrane), and thus conserves the redox energy in a proton gradient. The protein is NADH-quinone oxidoreductase subunit I of Afipia carboxidovorans (strain ATCC 49405 / DSM 1227 / KCTC 32145 / OM5) (Oligotropha carboxidovorans).